The sequence spans 117 residues: Large ribosomal subunit protein bL17 (117 aa).

The protein belongs to the bacterial ribosomal protein bL17 family. In terms of assembly, part of the 50S ribosomal subunit. Contacts protein L32.

The chain is Large ribosomal subunit protein bL17 from Campylobacter lari (strain RM2100 / D67 / ATCC BAA-1060).